The primary structure comprises 45 residues: Photosystem II reaction center protein K (45 aa).

Positions 1-8 (MDFALLLA) are excised as a propeptide. Residues 24–44 (LPLIPLFFLLLAFVWQAAVGF) traverse the membrane as a helical segment.

This sequence belongs to the PsbK family. PSII is composed of 1 copy each of membrane proteins PsbA, PsbB, PsbC, PsbD, PsbE, PsbF, PsbH, PsbI, PsbJ, PsbK, PsbL, PsbM, PsbT, PsbX, PsbY, PsbZ, Psb30/Ycf12, peripheral proteins PsbO, CyanoQ (PsbQ), PsbU, PsbV and a large number of cofactors. It forms dimeric complexes.

It is found in the cellular thylakoid membrane. In terms of biological role, one of the components of the core complex of photosystem II (PSII). PSII is a light-driven water:plastoquinone oxidoreductase that uses light energy to abstract electrons from H(2)O, generating O(2) and a proton gradient subsequently used for ATP formation. It consists of a core antenna complex that captures photons, and an electron transfer chain that converts photonic excitation into a charge separation. The chain is Photosystem II reaction center protein K from Gloeothece citriformis (strain PCC 7424) (Cyanothece sp. (strain PCC 7424)).